Consider the following 704-residue polypeptide: SH3KBP1-binding protein 1 (704 aa).

Residue Ala2 is modified to N-acetylalanine. The region spanning 19-88 (EVIHLNVGGK…LRTKELDPRG (70 aa)) is the BTB domain. The tract at residues 146–165 (VGPQQIGGRPAPVRRSNTMP) is disordered. Thr163 carries the phosphothreonine modification. WD repeat units follow at residues 233 to 280 (RLDW…GGSE), 283 to 322 (VFHL…WQVQ), 324 to 359 (VQPI…LRMK), 428 to 466 (VHRS…GMIS), and 548 to 586 (LECE…DGLG). Residues 609–704 (PLTSSRASFP…PKNTLNETSF (96 aa)) are disordered. Low complexity predominate over residues 611–631 (TSSRASFPSPSPRTSLTSLHS). Residues 618 to 623 (PSPSPR) carry the PXXXPR motif. 2 positions are modified to phosphoserine: Ser644 and Ser646. The PXXXPR motif lies at 678–683 (PTPAPR).

This sequence belongs to the KCTD3 family. As to quaternary structure, monomer. Interacts with CUL3; interaction is direct and forms a 5:5 heterodecamer. Interacts (via PXXXPR motifs) with SH3KBP1 (via SH3 domains). Directly interacts with cathepsin B/CTSB.

The protein localises to the lysosome. Its function is as follows. Inhibits CBL-SH3KBP1 complex mediated down-regulation of EGFR signaling by sequestration of SH3KBP1. Binds to SH3KBP1 and prevents its interaction with CBL and inhibits translocation of SH3KBP1 to EGFR containing vesicles upon EGF stimulation. The sequence is that of SH3KBP1-binding protein 1 (Shkbp1) from Rattus norvegicus (Rat).